The chain runs to 66 residues: MASKIFFVLAVFLVMSAVLPESFAGCKNLNSHCYRQHRECCHGLVCRRPNYGNGRGILWKCVRAKK.

Residues 1-24 (MASKIFFVLAVFLVMSAVLPESFA) form the signal peptide. 3 disulfides stabilise this stretch: C26–C41, C33–C46, and C40–C61.

The protein resides in the secreted. It is found in the nematocyst. Functionally, alpha-toxins act on postsynaptic membranes, they bind to the nicotinic acetylcholine receptors (nAChR) and thus inhibit them. This toxin competes with alpha-bungarotoxin for binding to orthosteric sites on muscle-type T.carlifornicus (IC(50)=1080 nM) and human alpha-7/CHRNA7 nAChRs (IC(50)=14.13 uM). In Metridium senile (Brown sea anemone), this protein is Alpha-actitoxin-Ms11a-2.